The primary structure comprises 350 residues: Twinfilin-1 (350 aa).

S2 carries the N-acetylserine modification. The 138-residue stretch at S2–L139 folds into the ADF-H 1 domain. A phosphoserine mark is found at S143 and S277. Residues G177–H313 enclose the ADF-H 2 domain. Residue Y309 is modified to Phosphotyrosine. The segment at Q316 to E350 is disordered. T349 is modified (phosphothreonine).

The protein belongs to the actin-binding proteins ADF family. Twinfilin subfamily. As to quaternary structure, interacts with G-actin; ADP-actin form and capping protein (CP). May also be able to interact with TWF2 and phosphoinositides, PI(4,5)P2. When bound to PI(4,5)P2, it is down-regulated. Interacts with ACTG1. In terms of processing, phosphorylated on serine and threonine residues.

Its subcellular location is the cytoplasm. The protein localises to the cytoskeleton. In terms of biological role, actin-binding protein involved in motile and morphological processes. Inhibits actin polymerization, likely by sequestering G-actin. By capping the barbed ends of filaments, it also regulates motility. Seems to play an important role in clathrin-mediated endocytosis and distribution of endocytic organelles. This chain is Twinfilin-1 (TWF1), found in Bos taurus (Bovine).